We begin with the raw amino-acid sequence, 610 residues long: Aspartate--tRNA(Asp/Asn) ligase (610 aa).

Glu196 contributes to the L-aspartate binding site. The aspartate stretch occupies residues 220-223; it reads QIFK. Arg242 contributes to the L-aspartate binding site. ATP is bound by residues 242-244 and Gln251; that span reads RDE. His465 is a binding site for L-aspartate. Glu499 is a binding site for ATP. L-aspartate is bound at residue Arg506. Residue 551 to 554 coordinates ATP; the sequence is GMDR.

Belongs to the class-II aminoacyl-tRNA synthetase family. Type 1 subfamily. In terms of assembly, homodimer.

The protein resides in the cytoplasm. It catalyses the reaction tRNA(Asx) + L-aspartate + ATP = L-aspartyl-tRNA(Asx) + AMP + diphosphate. In terms of biological role, aspartyl-tRNA synthetase with relaxed tRNA specificity since it is able to aspartylate not only its cognate tRNA(Asp) but also tRNA(Asn). Reaction proceeds in two steps: L-aspartate is first activated by ATP to form Asp-AMP and then transferred to the acceptor end of tRNA(Asp/Asn). This is Aspartate--tRNA(Asp/Asn) ligase from Nitratidesulfovibrio vulgaris (strain ATCC 29579 / DSM 644 / CCUG 34227 / NCIMB 8303 / VKM B-1760 / Hildenborough) (Desulfovibrio vulgaris).